We begin with the raw amino-acid sequence, 296 residues long: MAAGGPGTEPAAPVSSTSSLPLAALNMRVRRRLSLFLNVRTQVAADWTALAEEMDFEYLEIRQLETHADPTGRLLDAWQGRPGASVGRLLELLTKLGRDDVLLELGPSIEEDCQKYILKQQQEEAEKPLQVAAVDSSVPRTAELAGITTLDDPLGHMPERFDAFICYCPSDIQFVQEMIRQLEQTNYRLKLCVSDRDVLPGTCVWSIASELIEKRCRRMVVVVSDDYLQSKECDFQTKFALSLSPGAHQKRLIPIKYKAMKKEFPSILRFITVCDYTNPCTKSWFWTRLAKALSLP.

Residues 32–109 (RLSLFLNVRT…DVLLELGPSI (78 aa)) form the Death domain. Residues 110 to 155 (EEDCQKYILKQQQEEAEKPLQVAAVDSSVPRTAELAGITTLDDPLG) form an intermediate domain region. Positions 159 to 293 (ERFDAFICYC…WFWTRLAKAL (135 aa)) constitute a TIR domain. Phosphoserine is present on S244.

As to quaternary structure, homodimer. Also forms heterodimers with TIRAP. Binds to TLR2, TLR4, TLR5, IRAK1, IRAK2 and IRAK4 via their respective TIR domains. Interacts with IL18R1. Interacts with BMX, IL1RL1, IKBKE and IRF7. Interacts with LRRFIP1 and LRRFIP2; this interaction positively regulates Toll-like receptor (TLR) signaling in response to agonist. Interacts with FLII. LRRFIP1 and LRRFIP2 compete with FLII for MYD88-binding. Interacts with IRF1. Upon IL1B treatment, forms a complex with PELI1, IRAK1, IRAK4 and TRAF6; this complex recruits MAP3K7/TAK1, TAB1 and TAB2 to mediate NF-kappa-B activation. Direct binding of SMAD6 to PELI1 prevents the complex formation and hence negatively regulates IL1R-TLR signaling and eventually NF-kappa-B-mediated gene expression. May interact with PIK3AP1. Interacts (via TIR domain) with DHX9 (via H2A and OB-fold regions); this interaction is direct. Post-translationally, ubiquitinated; undergoes 'Lys-63'-linked polyubiquitination. OTUD4 specifically hydrolyzes 'Lys-63'-linked polyubiquitinated MYD88. Deubiquitinated by USP3 that cleaves 'Lys-63'-linked ubiquitin chains leading to inhibition of MYD88-induced NF-kappa-B signaling.

It is found in the cytoplasm. Functionally, adapter protein involved in the Toll-like receptor and IL-1 receptor signaling pathway in the innate immune response. Acts via IRAK1, IRAK2, IRF7 and TRAF6, leading to NF-kappa-B activation, cytokine secretion and the inflammatory response. Increases IL-8 transcription. Involved in IL-18-mediated signaling pathway. Activates IRF1 resulting in its rapid migration into the nucleus to mediate an efficient induction of IFN-beta, NOS2/INOS, and IL12A genes. Upon TLR8 activation by GU-rich single-stranded RNA (GU-rich RNA) derived from viruses, induces IL1B release through NLRP3 inflammasome activation. MyD88-mediated signaling in intestinal epithelial cells is crucial for maintenance of gut homeostasis and controls the expression of the antimicrobial lectin REG3G in the small intestine. This is Myeloid differentiation primary response protein MyD88 (Myd88) from Cercocebus atys (Sooty mangabey).